The sequence spans 688 residues: PTS system glucoside-specific EIICBA component (688 aa).

Residues 3–427 (KKLFGQLQRI…FKLKTPGRED (425 aa)) form the PTS EIIC type-1 domain. The next 10 helical transmembrane spans lie at 12-32 (IGKA…LLAF), 81-101 (LGLA…YLIM), 137-157 (LVLG…MGAL), 182-202 (FVPI…SFAW), 223-243 (LTTF…LHHI), 284-304 (AFTT…AFAI), 315-335 (VVGG…ITEP), 340-360 (FLFV…TSFL), 364-384 (LLGV…ILYG), and 395-415 (LVIP…DFAI). The region spanning 438–519 (AKLPFDVLDA…AKIMSGEITK (82 aa)) is the PTS EIIB type-1 domain. Catalysis depends on cysteine 460, which acts as the Phosphocysteine intermediate; for EIIB activity. One can recognise a PTS EIIA type-1 domain in the interval 560 to 664 (DQVFAGKMMG…SIVTPMIITN (105 aa)). Histidine 612 acts as the Tele-phosphohistidine intermediate; for EIIA activity in catalysis.

Its subcellular location is the cell membrane. The phosphoenolpyruvate-dependent sugar phosphotransferase system (sugar PTS), a major carbohydrate active -transport system, catalyzes the phosphorylation of incoming sugar substrates concomitantly with their translocation across the cell membrane. This system is involved in alpha- and beta-glucoside transport. The polypeptide is PTS system glucoside-specific EIICBA component (glcB) (Staphylococcus aureus (strain USA300)).